Here is a 549-residue protein sequence, read N- to C-terminus: Oxygen-dependent choline dehydrogenase (549 aa).

4–33 (DFVIIGSGSAGSAMAYRLSEDGRYSVIVIE) serves as a coordination point for FAD. His-465 functions as the Proton acceptor in the catalytic mechanism.

The protein belongs to the GMC oxidoreductase family. The cofactor is FAD.

It carries out the reaction choline + A = betaine aldehyde + AH2. The enzyme catalyses betaine aldehyde + NAD(+) + H2O = glycine betaine + NADH + 2 H(+). The protein operates within amine and polyamine biosynthesis; betaine biosynthesis via choline pathway; betaine aldehyde from choline (cytochrome c reductase route): step 1/1. Functionally, involved in the biosynthesis of the osmoprotectant glycine betaine. Catalyzes the oxidation of choline to betaine aldehyde and betaine aldehyde to glycine betaine at the same rate. The chain is Oxygen-dependent choline dehydrogenase from Brucella melitensis biotype 1 (strain ATCC 23456 / CCUG 17765 / NCTC 10094 / 16M).